We begin with the raw amino-acid sequence, 692 residues long: Elongation factor G (692 aa).

Residues 8–282 (EKTRNIGIMA…AVIDYLPSPL (275 aa)) enclose the tr-type G domain. GTP-binding positions include 17 to 24 (AHVDAGKT), 81 to 85 (DTPGH), and 135 to 138 (NKMD).

The protein belongs to the TRAFAC class translation factor GTPase superfamily. Classic translation factor GTPase family. EF-G/EF-2 subfamily.

It localises to the cytoplasm. Catalyzes the GTP-dependent ribosomal translocation step during translation elongation. During this step, the ribosome changes from the pre-translocational (PRE) to the post-translocational (POST) state as the newly formed A-site-bound peptidyl-tRNA and P-site-bound deacylated tRNA move to the P and E sites, respectively. Catalyzes the coordinated movement of the two tRNA molecules, the mRNA and conformational changes in the ribosome. The polypeptide is Elongation factor G (Streptococcus agalactiae serotype III (strain NEM316)).